The following is a 728-amino-acid chain: Leucine-rich repeat and calponin homology domain-containing protein 1 (728 aa).

Over residues 24-36 (HHPHHHHHHHQHH) the composition is skewed to basic residues. The tract at residues 24-57 (HHPHHHHHHHQHHGGTGAPGGAGGGGGGSGGFNL) is disordered. Gly residues predominate over residues 37-54 (GGTGAPGGAGGGGGGSGG). 9 LRR repeats span residues 98-119 (DTVQADLSKNRLVEVPMELCHF), 121-143 (SLEILNLYHNCIRVIPEAIVNLQ), 144-166 (MLTYLNLSRNQLSALPACLCGLP), 167-187 (LKVLIASNNKLGSLPEEIGQL), 189-210 (QLMELDVSCNEITALPQQIGQL), 212-234 (SLRELNVRRNYLKVLPQELVDLS), 235-255 (LVKFDFSCNKVLVIPICFREM), 257-278 (QLQVLLLENNPLQSPPAQICTK), and 283-304 (IFKYLSIQACQIKTADSLYLHT). The span at 311 to 322 (HQHVEDGKKDSD) shows a compositional bias: basic and acidic residues. A disordered region spans residues 311–348 (HQHVEDGKKDSDSGVGSDNGDKRLSATEPSDEDTVSLN). Ser-370 carries the phosphoserine modification. A disordered region spans residues 377 to 398 (HQEFQPEPSLLGDSTNSGEERD). Ser-409 carries the post-translational modification Phosphoserine. Residues 516–525 (LQSNGSQYSP) are compositionally biased toward polar residues. A disordered region spans residues 516–547 (LQSNGSQYSPNEIRENSPAVSPTTNSTAPFGL). A phosphoserine mark is found at Ser-532 and Ser-536. Residues 533–543 (PAVSPTTNSTA) show a composition bias toward polar residues. A Phosphothreonine modification is found at Thr-568. In terms of domain architecture, Calponin-homology (CH) spans 576 to 692 (MREEKELVEQ…TLLALGEKAP (117 aa)).

Interacts (via LRR repeats) with unphosphorylated DOCK8 (via DHR-2 domain); the interaction prevents the interaction between DOCK8 and CDC42.

It localises to the cytoplasm. Functionally, acts as a negative regulator of GTPase CDC42 by sequestering CDC42-guanine exchange factor DOCK8. Probably by preventing CDC42 activation, negatively regulates CD4(+) T-cell migration. The protein is Leucine-rich repeat and calponin homology domain-containing protein 1 (LRCH1) of Homo sapiens (Human).